A 443-amino-acid chain; its full sequence is MEIASNKGVIADASTPAGRAGMSESEWREAIKFDSTDTGWVIMSIGMAIGAGIVFLPVQVGLMGLWVFLLSSVIGYPAMYLFQRLFINTLAESPECKDYPSVISGYLGKNWGILLGALYFVMLVIWMFVYSTAITNDSASYLHTFGVTEGLLSDSPFYGLVLICILVAISSRGEKLLFKISTGMVLTKLLVVAALGVSMVGMWHLYNVGSLPPLGLLVKNAIITLPFTLTSILFIQTLSPMVISYRSREKSIEVARHKALRAMNIAFGILFIIVFFYAVSFTLAMGHDEAVKAYEQNISALAIAAQFISGDGAAWVKVVSVILNIFAVMTAFFGVYLGFREATQGIVMNILRRKMPAEKINENLVQRGIMIFAILLAWSAIVLNAPVLSFTSICSPIFGLVGCLIPAWLVYKVPALHKYKGMSLYLIIVTGLLLCVSPFLAFS.

11 helical membrane passes run Thr38–Val60, Leu65–Ile87, Trp111–Ser131, Gly150–Ser170, Gly183–Trp203, Gly215–Ile235, Ile265–Met285, Val319–Phe339, Gly368–Leu388, Phe390–Val410, and Met422–Phe442.

The protein belongs to the amino acid/polyamine transporter 2 family. SdaC/TdcC subfamily.

It is found in the cell inner membrane. Functionally, transports both D- and L-serine; allows growth of strain CFT073 cells normally unable to transport D-serine on that substrate. Transport relies on the H(+) gradient and is not competed by L-threonine. May play a role in L-cysteine detoxification. The polypeptide is Serine transporter (Escherichia coli O157:H7).